The sequence spans 160 residues: S-ribosylhomocysteine lyase (160 aa).

Residues His-57, His-61, and Cys-127 each coordinate Fe cation.

Belongs to the LuxS family. As to quaternary structure, homodimer. Fe cation serves as cofactor.

It catalyses the reaction S-(5-deoxy-D-ribos-5-yl)-L-homocysteine = (S)-4,5-dihydroxypentane-2,3-dione + L-homocysteine. In terms of biological role, involved in the synthesis of autoinducer 2 (AI-2) which is secreted by bacteria and is used to communicate both the cell density and the metabolic potential of the environment. The regulation of gene expression in response to changes in cell density is called quorum sensing. Catalyzes the transformation of S-ribosylhomocysteine (RHC) to homocysteine (HC) and 4,5-dihydroxy-2,3-pentadione (DPD). In Streptococcus pyogenes serotype M4 (strain MGAS10750), this protein is S-ribosylhomocysteine lyase.